A 157-amino-acid chain; its full sequence is Protein Smg (157 aa).

This sequence belongs to the Smg family.

The polypeptide is Protein Smg (Sodalis glossinidius (strain morsitans)).